The sequence spans 623 residues: Alpha-1,2-mannosyltransferase Alg9 (623 aa).

The next 8 helical transmembrane spans lie at 152–172 (LIFY…ERYM), 193–223 (LFSV…AAWW), 229–254 (FAIF…PLVL), 266–284 (FVQW…MIAI), 326–348 (FLNF…IDYL), 360–378 (FPHY…VFFA), 390–410 (IYPL…RIFF), and 431–452 (FIAI…FALY).

This sequence belongs to the glycosyltransferase 22 family.

The protein resides in the endoplasmic reticulum membrane. The catalysed reaction is an alpha-D-Man-(1-&gt;2)-alpha-D-Man-(1-&gt;2)-alpha-D-Man-(1-&gt;3)-[alpha-D-Man-(1-&gt;3)-alpha-D-Man-(1-&gt;6)]-beta-D-Man-(1-&gt;4)-beta-D-GlcNAc-(1-&gt;4)-alpha-D-GlcNAc-diphospho-di-trans,poly-cis-dolichol + a di-trans,poly-cis-dolichyl beta-D-mannosyl phosphate = an alpha-D-Man-(1-&gt;2)-alpha-D-Man-(1-&gt;2)-alpha-D-Man-(1-&gt;3)-[alpha-D-Man-(1-&gt;2)-alpha-D-Man-(1-&gt;3)-alpha-D-Man-(1-&gt;6)]-beta-D-Man-(1-&gt;4)-beta-D-GlcNAc-(1-&gt;4)-alpha-D-GlcNAc-diphospho-di-trans,poly-cis-dolichol + a di-trans,poly-cis-dolichyl phosphate + H(+). It carries out the reaction an alpha-D-Man-(1-&gt;2)-alpha-D-Man-(1-&gt;2)-alpha-D-Man-(1-&gt;3)-[alpha-D-Man-(1-&gt;2)-alpha-D-Man-(1-&gt;3)-[alpha-D-Man-(1-&gt;6)]-alpha-D-Man-(1-&gt;6)]-beta-D-Man-(1-&gt;4)-beta-D-GlcNAc-(1-&gt;4)-alpha-D-GlcNAc-diphospho-di-trans,poly-cis-dolichol + a di-trans,poly-cis-dolichyl beta-D-mannosyl phosphate = an alpha-D-Man-(1-&gt;2)-alpha-D-Man-(1-&gt;2)-alpha-D-Man-(1-&gt;3)-[alpha-D-Man-(1-&gt;2)-alpha-D-Man-(1-&gt;3)-[alpha-D-Man-(1-&gt;2)-alpha-D-Man-(1-&gt;6)]-alpha-D-Man-(1-&gt;6)]-beta-D-Man-(1-&gt;4)-beta-D-GlcNAc-(1-&gt;4)-alpha-D-GlcNAc-diphospho-di-trans,poly-cis-dolichol + a di-trans,poly-cis-dolichyl phosphate + H(+). Its pathway is protein modification; protein glycosylation. Its function is as follows. Probable alpha-1,2-mannosyltransferase involved in the N-glycosylation pathway. Probably involved in glycosylation of the TNF receptor grnd, regulating its ligand affinity. Required for normal epithelial growth and architecture. Suppressor of JNK-dependent intestinal stem cell proliferation. This Drosophila melanogaster (Fruit fly) protein is Alpha-1,2-mannosyltransferase Alg9.